The sequence spans 336 residues: MNLKPAIFAVVIGTTDVSLIPGITVAGATPELTHYTPALDVEYLLTGRPITLDVVPVTPDGIPTPALVTRAVAFDVPKLVVNAGARVRPRVPYVDLGGEPGGDIRRGPAMSCAAAEELASRGRMLGRELGRLGVVYLGESIPGGTTTAMAILVGLGYNAWGRTSSASPNNPKELKAQVVMDALERAKPPPDPLRVVCELGDPVHPALAAIALGVAEAGGVPVLAGGTQMAAAAAIYKAMGGDLAKLHVVTTRWIVEDKSADFLGLMAEVGVKNVHVATASFGESKYEGLRAYERGAVKEGVGMGGALFYAQSMGRDVLKLVEAEYERVWRYVKRGD.

Belongs to the UPF0284 family.

The sequence is that of UPF0284 protein Pcal_1534 from Pyrobaculum calidifontis (strain DSM 21063 / JCM 11548 / VA1).